We begin with the raw amino-acid sequence, 100 residues long: Urease subunit gamma (100 aa).

The protein belongs to the urease gamma subunit family. In terms of assembly, heterotrimer of UreA (gamma), UreB (beta) and UreC (alpha) subunits. Three heterotrimers associate to form the active enzyme.

Its subcellular location is the cytoplasm. The catalysed reaction is urea + 2 H2O + H(+) = hydrogencarbonate + 2 NH4(+). It participates in nitrogen metabolism; urea degradation; CO(2) and NH(3) from urea (urease route): step 1/1. The chain is Urease subunit gamma from Methylobacillus flagellatus (strain ATCC 51484 / DSM 6875 / VKM B-1610 / KT).